Here is a 332-residue protein sequence, read N- to C-terminus: Fructose-1,6-bisphosphatase class 1 (332 aa).

Residues glutamate 94, aspartate 116, leucine 118, and aspartate 119 each contribute to the Mg(2+) site. Residues 119-122, asparagine 211, tyrosine 239, 257-259, and lysine 269 contribute to the substrate site; these read DGSS and YLY. Glutamate 275 provides a ligand contact to Mg(2+).

It belongs to the FBPase class 1 family. As to quaternary structure, homotetramer. It depends on Mg(2+) as a cofactor.

It is found in the cytoplasm. The catalysed reaction is beta-D-fructose 1,6-bisphosphate + H2O = beta-D-fructose 6-phosphate + phosphate. It functions in the pathway carbohydrate biosynthesis; Calvin cycle. The chain is Fructose-1,6-bisphosphatase class 1 from Synechococcus sp. (strain JA-2-3B'a(2-13)) (Cyanobacteria bacterium Yellowstone B-Prime).